Reading from the N-terminus, the 1161-residue chain is Voltage-gated inwardly rectifying potassium channel KCNH2 (1161 aa).

Residues 1–405 (MPVRRGHVAP…RIHRWTILHY (405 aa)) lie on the Cytoplasmic side of the membrane. The PAS domain occupies 17 to 88 (TIIRKFEGQS…AAQIAQALLG (72 aa)). Residues 92–144 (RKVEIAFYRKDGSCFLCLVDVVPVKNEDGAVIMFILNFEVVMEKDMVGSPARD) form the PAC domain. Residues 233–286 (ALVGSCSPPPPVSAPGPHPSLRAHSLNPDASGSSCSLARTRSRESCASVRRASS) are disordered. S239 and S245 each carry phosphoserine. Pro residues predominate over residues 239-250 (SPPPPVSAPGPH). Polar residues predominate over residues 260–271 (PDASGSSCSLAR). Phosphoserine is present on residues S285, S286, S322, and S353. A helical membrane pass occupies residues 406 to 426 (SPFKAVWDWLILLLVIYTAVF). Residues 427–452 (TPYSAAFLLKETEEGPPAPECGYACQ) are Extracellular-facing. A helical transmembrane segment spans residues 453–473 (PLAVVDLIVDIMFIVDILINF). At 474-497 (RTTYVNANEEVVSHPGRIAVHYFK) the chain is on the cytoplasmic side. The chain crosses the membrane as a helical span at residues 498-518 (GWFLIDMVAAIPFDLLIFGSG). The Extracellular portion of the chain corresponds to 519–522 (SEEL). The chain crosses the membrane as a helical; Voltage-sensor span at residues 523 to 543 (IGLLKTARLLRLVRVARKLDR). Topologically, residues 544–549 (YSEYGA) are cytoplasmic. A helical membrane pass occupies residues 550–570 (AVLLLLMCTFALIAHWLACIW). Topologically, residues 571-613 (YAIGNMEQPHMDSRIGWLHNLGDQMGKPYNSSGLGGPSIKDKY) are extracellular. N-linked (GlcNAc...) asparagine glycosylation occurs at N600. The segment at residues 614–634 (VTGLYFTFSSLTSVGFGNVSP) is an intramembrane region (pore-forming). A Selectivity filter motif is present at residues 626–631 (SVGFGN). At 635 to 640 (NTNSEK) the chain is on the extracellular side. Residues 641 to 661 (IFSICVMLIGSLMYASIFGNV) form a helical membrane-spanning segment. Residues 662–1161 (SAIIQRLYSG…LHRHGSDPGS (500 aa)) are Cytoplasmic-facing. The interval 744–844 (PFRGATKDCL…IHRDDLLEVL (101 aa)) is cNMP-binding domain. The segment at 872–985 (GSPGSTEWEG…TEDCEKSSDT (114 aa)) is disordered. Phosphoserine is present on residues S873 and S876. Residues 885–894 (RQRKRKLSFR) show a composition bias toward basic residues. The span at 930-941 (GESPSSGPSSPE) shows a compositional bias: low complexity. The span at 962–972 (SPRPPGEPPGG) shows a compositional bias: pro residues. The residue at position 1016 (R1016) is an Omega-N-methylarginine. A coiled-coil region spans residues 1037-1064 (RGDVESRLDALQRQLNRLETRLSADMAT). The disordered stretch occupies residues 1121 to 1161 (ELPPGAPELPQEGPTRRLSLPGQLGALTSQPLHRHGSDPGS). At S1139 the chain carries Phosphoserine.

Belongs to the potassium channel family. H (Eag) (TC 1.A.1.20) subfamily. Kv11.1/KCNH2 sub-subfamily. The potassium channel is probably composed of a homo- or heterotetrameric complex of pore-forming alpha subunits that can associate with modulating beta subunits. Interacts with DNAJB12 and DNAJB14; chaperones DNAJB12 and DNAJB14 promote tetramerization. Heteromultimer with KCNH6/ERG2 and KCNH7/ERG3. Interacts with ALG10B. Forms a stable complex with KCNE1 or KCNE2, and that this heteromultimerization regulates Inward rectifier potassium channel activity. Interacts with CANX. The core-glycosylated, but not the fully glycosylated form interacts with RNF207. Interacts with NDFIP1 and NDFIP2; this interaction decreases the cell membrane expression by targeting KCNH2, through interaction with NEDD4L, for the degradation through the multivesicular bodies (MVBs)-lysosomal pathway. In terms of processing, phosphorylated on serine and threonine residues. Phosphorylation by PKA inhibits ion conduction. As to expression, detected in heart, both in atrium and in left ventricle.

Its subcellular location is the cell membrane. It carries out the reaction K(+)(in) = K(+)(out). Functionally, pore-forming (alpha) subunit of voltage-gated inwardly rectifying potassium channel. Characterized by unusual gating kinetics by producing relatively small outward currents during membrane depolarization and large inward currents during subsequent repolarization which reflect a rapid inactivation during depolarization and quick recovery from inactivation but slow deactivation (closing) during repolarization. Channel properties are modulated by cAMP and subunit assembly. Forms a stable complex with KCNE1 or KCNE2, and that this heteromultimerization regulates inward rectifier potassium channel activity. The protein is Voltage-gated inwardly rectifying potassium channel KCNH2 of Oryctolagus cuniculus (Rabbit).